The following is a 205-amino-acid chain: Recombination protein RecR (205 aa).

The C4-type zinc-finger motif lies at 60–75; it reads CKVCHNISDTETCQIC. In terms of domain architecture, Toprim spans 83–178; that stretch reads SMVCVVENIR…KLSVLARGVS (96 aa).

This sequence belongs to the RecR family.

Functionally, may play a role in DNA repair. It seems to be involved in an RecBC-independent recombinational process of DNA repair. It may act with RecF and RecO. The sequence is that of Recombination protein RecR from Bacteroides fragilis (strain ATCC 25285 / DSM 2151 / CCUG 4856 / JCM 11019 / LMG 10263 / NCTC 9343 / Onslow / VPI 2553 / EN-2).